The sequence spans 168 residues: Myosin regulatory light chain 11 (168 aa).

A2 carries the post-translational modification N,N,N-trimethylalanine. S15 is subject to Phosphoserine. 3 EF-hand domains span residues 24–59, 94–129, and 130–165; these read TQIQ…MGRL, DPED…QCDR, and FTPE…GEDK. Ca(2+)-binding residues include D37, N39, D41, and D48.

As to quaternary structure, myosin is a hexamer of 2 heavy chains and 4 light chains. Post-translationally, the N-terminus is blocked. N,N,N-trimethylalanine, found in other myosin light chains would not have been detected in the N-terminal tryptic peptide in PubMed:7358336 because it would remain trimethylated and ninhydrin negative after hydrolysis.

In terms of biological role, myosin regulatory subunit that plays an essential to maintain muscle integrity during early development. Plays a role in muscle contraction. The polypeptide is Myosin regulatory light chain 11 (MYL11) (Gallus gallus (Chicken)).